The sequence spans 307 residues: D-alanine--D-alanine ligase (307 aa).

Residues 101–301 (KTVMRAAGVD…FGELVRWMVE (201 aa)) form the ATP-grasp domain. Position 127–182 (127–182 (PLPPPYVVKPIAEGSSVGVIIVRDGRSHPPQILASEEWTFGEQVLAEPYIAGRELT)) interacts with ATP. Mg(2+) contacts are provided by Asp251, Glu268, and Asn270.

Belongs to the D-alanine--D-alanine ligase family. Requires Mg(2+) as cofactor. It depends on Mn(2+) as a cofactor.

It localises to the cytoplasm. The catalysed reaction is 2 D-alanine + ATP = D-alanyl-D-alanine + ADP + phosphate + H(+). It functions in the pathway cell wall biogenesis; peptidoglycan biosynthesis. Its function is as follows. Cell wall formation. This Methylobacterium radiotolerans (strain ATCC 27329 / DSM 1819 / JCM 2831 / NBRC 15690 / NCIMB 10815 / 0-1) protein is D-alanine--D-alanine ligase.